The primary structure comprises 295 residues: Voltage-gated potassium channel (295 aa).

The Cytoplasmic portion of the chain corresponds to 1–38 (MSVERWVFPGCSVMARFRRGLSDLGGRVRNIGDVMEHP). A helical membrane pass occupies residues 39–63 (LVELGVSYAALLSVIVVVVEYTMQL). At 64–67 (SGEY) the chain is on the extracellular side. A helical membrane pass occupies residues 68–92 (LVRLYLVDLILVIILWADYAYRAYK). Topologically, residues 93 to 96 (SGDP) are cytoplasmic. An intramembrane region (helical) is located at residues 97–105 (AGYVKKTLY). Residues 106–108 (EIP) lie on the Extracellular side of the membrane. The chain crosses the membrane as a helical; Voltage-sensor span at residues 109–125 (ALVPAGLLALIEGHLAG). Residues 126–128 (LGL) lie on the Cytoplasmic side of the membrane. A helical; Voltage-sensor transmembrane segment spans residues 129-145 (FRLVRLLRFLRILLIIS). Residues 146–159 (RGSKFLSAIADAAD) are Cytoplasmic-facing. Residues 160–184 (KIRFYHLFGAVMLTVLYGAFAIYIV) form a helical membrane-spanning segment. Residues 185–195 (EYPDPNSSIKS) lie on the Extracellular side of the membrane. The segment at residues 196–208 (VFDALWWAVVTAT) is an intramembrane region (pore-forming). Residues 209–214 (TVGYGD) carry the Selectivity filter motif. The Extracellular portion of the chain corresponds to 209–221 (TVGYGDVVPATPI). A helical transmembrane segment spans residues 222-253 (GKVIGIAVMLTGISALTLLIGTVSNMFQKILV). Topologically, residues 254–295 (GEPEPSCSPAKLAEMVSSMSEEEFEEFVRTLKNLRRLENSMK) are cytoplasmic.

The protein belongs to the potassium channel family.

It is found in the cell membrane. In terms of biological role, mediates a strong voltage-dependent potassium ion permeability of excitable membranes. Assuming opened or closed conformations in response to the voltage difference across the membrane, the protein forms a potassium-selective channel through which potassium ions may pass in accordance with their electrochemical gradient. The sequence is that of Voltage-gated potassium channel from Aeropyrum pernix (strain ATCC 700893 / DSM 11879 / JCM 9820 / NBRC 100138 / K1).